Consider the following 195-residue polypeptide: Imidazoleglycerol-phosphate dehydratase (195 aa).

Belongs to the imidazoleglycerol-phosphate dehydratase family.

It localises to the cytoplasm. It catalyses the reaction D-erythro-1-(imidazol-4-yl)glycerol 3-phosphate = 3-(imidazol-4-yl)-2-oxopropyl phosphate + H2O. Its pathway is amino-acid biosynthesis; L-histidine biosynthesis; L-histidine from 5-phospho-alpha-D-ribose 1-diphosphate: step 6/9. In Parafrankia sp. (strain EAN1pec), this protein is Imidazoleglycerol-phosphate dehydratase.